The chain runs to 347 residues: Sesquiterpene synthase M422DRAFT_47084 (347 aa).

Mg(2+) contacts are provided by aspartate 93, asparagine 228, serine 232, and glutamate 236. Residues 93 to 97 (DEYTD) carry the DDXXD motif motif. The (2E,6E)-farnesyl diphosphate site is built by arginine 318 and tyrosine 319.

It belongs to the terpene synthase family. Mg(2+) is required as a cofactor.

The enzyme catalyses (2E,6E)-farnesyl diphosphate = viridiflorene + diphosphate. In terms of biological role, terpene cyclase that catalyzes the cyclization of farnesyl diphosphate (FPP) to viridiflorene and viridiflorol. This Sphaerobolus stellatus (strain SS14) protein is Sesquiterpene synthase M422DRAFT_47084.